We begin with the raw amino-acid sequence, 538 residues long: Bifunctional purine biosynthesis protein PurH (538 aa).

In terms of domain architecture, MGS-like spans 6–158 (KHIPAPDLHR…KNHAYVATVV (153 aa)).

The protein belongs to the PurH family.

The enzyme catalyses (6R)-10-formyltetrahydrofolate + 5-amino-1-(5-phospho-beta-D-ribosyl)imidazole-4-carboxamide = 5-formamido-1-(5-phospho-D-ribosyl)imidazole-4-carboxamide + (6S)-5,6,7,8-tetrahydrofolate. The catalysed reaction is IMP + H2O = 5-formamido-1-(5-phospho-D-ribosyl)imidazole-4-carboxamide. Its pathway is purine metabolism; IMP biosynthesis via de novo pathway; 5-formamido-1-(5-phospho-D-ribosyl)imidazole-4-carboxamide from 5-amino-1-(5-phospho-D-ribosyl)imidazole-4-carboxamide (10-formyl THF route): step 1/1. The protein operates within purine metabolism; IMP biosynthesis via de novo pathway; IMP from 5-formamido-1-(5-phospho-D-ribosyl)imidazole-4-carboxamide: step 1/1. The chain is Bifunctional purine biosynthesis protein PurH from Brucella ovis (strain ATCC 25840 / 63/290 / NCTC 10512).